Reading from the N-terminus, the 437-residue chain is tRNA-2-methylthio-N(6)-dimethylallyladenosine synthase (437 aa).

The 115-residue stretch at 1 to 115 (MKVYIETMGC…ISQVIHKEKA (115 aa)) folds into the MTTase N-terminal domain. Positions 10, 46, 78, 148, 152, and 155 each coordinate [4Fe-4S] cluster. In terms of domain architecture, Radical SAM core spans 134-367 (KKAQIRSLLN…QNRHKEILEE (234 aa)). The TRAM domain maps to 370–436 (KLEVGKTHVV…KGRLMATTKG (67 aa)).

Belongs to the methylthiotransferase family. MiaB subfamily. In terms of assembly, monomer. The cofactor is [4Fe-4S] cluster.

The protein localises to the cytoplasm. The enzyme catalyses N(6)-dimethylallyladenosine(37) in tRNA + (sulfur carrier)-SH + AH2 + 2 S-adenosyl-L-methionine = 2-methylsulfanyl-N(6)-dimethylallyladenosine(37) in tRNA + (sulfur carrier)-H + 5'-deoxyadenosine + L-methionine + A + S-adenosyl-L-homocysteine + 2 H(+). Catalyzes the methylthiolation of N6-(dimethylallyl)adenosine (i(6)A), leading to the formation of 2-methylthio-N6-(dimethylallyl)adenosine (ms(2)i(6)A) at position 37 in tRNAs that read codons beginning with uridine. This Helicobacter pylori (strain G27) protein is tRNA-2-methylthio-N(6)-dimethylallyladenosine synthase.